The sequence spans 114 residues: Large ribosomal subunit protein bL19 (114 aa).

The protein belongs to the bacterial ribosomal protein bL19 family.

Its function is as follows. This protein is located at the 30S-50S ribosomal subunit interface and may play a role in the structure and function of the aminoacyl-tRNA binding site. The sequence is that of Large ribosomal subunit protein bL19 from Lactococcus lactis subsp. cremoris (strain MG1363).